Here is a 438-residue protein sequence, read N- to C-terminus: Glutaryl-CoA dehydrogenase, mitochondrial (438 aa).

The transit peptide at 1–44 directs the protein to the mitochondrion; the sequence is MALRGVSVQLLSRVPGLRVFRTWVSSAAQTEKVGRTQSQLAKSS. Substrate-binding positions include 138–139 and S186; that span reads RS. FAD-binding positions include 177 to 186, S186, and 212 to 214; these read FGLTEPNSGS and WIT. An N6-acetyllysine modification is found at K240. A substrate-binding site is contributed by 287–294; it reads FGCLNNGR. FAD contacts are provided by residues R319, Q330, and 387–391; that span reads DMLGG. The Proton acceptor role is filled by E414. G415 contributes to the substrate binding site. FAD is bound by residues T416, 416–418, and F434; that span reads THD.

Belongs to the acyl-CoA dehydrogenase family. As to quaternary structure, homotetramer. FAD is required as a cofactor.

The protein localises to the mitochondrion matrix. The catalysed reaction is glutaryl-CoA + oxidized [electron-transfer flavoprotein] + 2 H(+) = (2E)-butenoyl-CoA + reduced [electron-transfer flavoprotein] + CO2. It participates in amino-acid metabolism; lysine degradation. Its pathway is amino-acid metabolism; tryptophan metabolism. Functionally, catalyzes the oxidative decarboxylation of glutaryl-CoA to crotonyl-CoA and CO(2) in the degradative pathway of L-lysine, L-hydroxylysine, and L-tryptophan metabolism. It uses electron transfer flavoprotein as its electron acceptor. This Macaca fascicularis (Crab-eating macaque) protein is Glutaryl-CoA dehydrogenase, mitochondrial (GCDH).